Consider the following 141-residue polypeptide: Subtilase cytotoxin subunit B (141 aa).

The signal sequence occupies residues 1–23 (MTIKRFFVCAGIMGCLSLNPAMA). N-glycoloyl-alpha-neuraminate is bound by residues 33–35 (MFS) and glutamine 59. The segment at 89-94 (YFYTTG) is hydrophobic patch important for binding to SubA. Position 101 (tyrosine 101) interacts with N-glycoloyl-alpha-neuraminate.

Forms a complex with SubA with the stoichiometry SubA1:SubB5 (called SubAB5). Each SubB subunit makes different contacts with the single SubA subunit. This subunit alone forms pentamers.

Its subcellular location is the secreted. It is found in the host cytoplasm. The protein localises to the host cytosol. It localises to the host endoplasmic reticulum lumen. Receptor-binding subunit of subtilase cytotoxin SubAB5. Required for receptor-binding and thus correct trafficking in the host cell. Has specificity for host glycans terminating in the sialic acid N-glycolyl-alpha-neuraminic acid (Neu5Gc); each subunit in the SubB pentamer binds one Neu5Gc. The protease subunit (SubA) cleaves host BiP/HSPA5, inducing the host endoplasmic reticulum stress response and eventual cell death. Culture supernatant of E.coli expressing both subA and subB are toxic for Vero cells (African green monkey kidney cell line), Chinese hamster ovary cells and Hct-8 cells (human colonic epithelial cell line); the subunits are not toxic individually. Purified SubAB5 is highly toxic, &lt;0.1 pg is able to kill at least 50% of 30'000 Vero cells in a microtiter plate assay after 3 days; no cytotoxicity is seen at 24 hours. Preabsorption with cells expressing a ganglioside GM2 mimic reduced cytotoxicity of SubAB5 by 93% in the Vero cytotoxicity assay. Intraperitoneal injection of 200 ng of purified SubAB5 kills mice; the higher the dose the faster the mice die. Animals injected with purified SubAB5 have microvascular thrombi in the brain and other organs, including the renal tubules and glomeruli. Mice fed E.coli cells expressing cloned SubAB5 experience drastic weight loss and appear ill and lethargic. SubB alone at 2.5 ug/ml causes vacuolation of Vero cells, which requires the V-type ATPase proton pump; treated cells die. Protein synthesis in Vero cells is transiently inhibited by SubAB5; both subunits are required for this effect. Inhibition of protein synthesis is prevented by brefeldin A; cells are arrested in the G1 phase. SubAB5 at 100 ng/ml induced caspase-dependent apoptosis in Vero cells through mitochondrial membrane damage. This is Subtilase cytotoxin subunit B from Escherichia coli.